The following is a 100-amino-acid chain: uncharacterized protein (100 aa).

The helical transmembrane segment at valine 68–phenylalanine 88 threads the bilayer.

It localises to the membrane. This is an uncharacterized protein from Saccharomyces cerevisiae (strain ATCC 204508 / S288c) (Baker's yeast).